The chain runs to 777 residues: Kelch domain-containing protein 7A (777 aa).

Residues valine 21–tyrosine 38 traverse the membrane as a helical segment. Residues alanine 43–cysteine 207 form a disordered region. Residue serine 86 is modified to Phosphoserine. The span at threonine 113–glycine 127 shows a compositional bias: basic and acidic residues. A glycan (N-linked (GlcNAc...) asparagine) is linked at asparagine 257. Residues leucine 313 to glycine 359 form a disordered region. A compositionally biased stretch (gly residues) spans leucine 326–alanine 336. 5 Kelch repeats span residues threonine 328–glutamate 374, glutamine 492–leucine 538, tyrosine 541–glycine 589, histidine 590–arginine 632, and glutamate 635–glycine 677. Serine 365 carries the phosphoserine modification.

The protein resides in the membrane. The polypeptide is Kelch domain-containing protein 7A (KLHDC7A) (Homo sapiens (Human)).